A 318-amino-acid polypeptide reads, in one-letter code: Methionyl-tRNA formyltransferase (318 aa).

Residue 112–115 (SILP) coordinates (6S)-5,6,7,8-tetrahydrofolate.

Belongs to the Fmt family.

It carries out the reaction L-methionyl-tRNA(fMet) + (6R)-10-formyltetrahydrofolate = N-formyl-L-methionyl-tRNA(fMet) + (6S)-5,6,7,8-tetrahydrofolate + H(+). In terms of biological role, attaches a formyl group to the free amino group of methionyl-tRNA(fMet). The formyl group appears to play a dual role in the initiator identity of N-formylmethionyl-tRNA by promoting its recognition by IF2 and preventing the misappropriation of this tRNA by the elongation apparatus. This is Methionyl-tRNA formyltransferase from Haemophilus influenzae (strain ATCC 51907 / DSM 11121 / KW20 / Rd).